A 291-amino-acid chain; its full sequence is MNDATATRLDGKALAKQIETELSQRVAAVIKKTGRTPILATILVGDDPASATYVRMKGNACKRVGMESIRVEMPASTTTEQLLAKIDELNNNPDVHGILLQHPVPEQIDERACFDAIDLNKDVDGVTSLGFGRMSMGEPAYGSCTPQGIMYLLERYFLKNGIEFAGKNAVVVGRSAILGKPMAQMLLNANCTVTICHSKTQNLEEHVGRADILVGAVGVPELIKKDWIKPGAIVVDAGFHPTEDGGVGDIELKGIESIAAAYTPVPGGVGPMTINTLIRQTVEAAEKAAQA.

NADP(+)-binding positions include 173-175 and Ser-198; that span reads GRS.

This sequence belongs to the tetrahydrofolate dehydrogenase/cyclohydrolase family. In terms of assembly, homodimer.

It carries out the reaction (6R)-5,10-methylene-5,6,7,8-tetrahydrofolate + NADP(+) = (6R)-5,10-methenyltetrahydrofolate + NADPH. The enzyme catalyses (6R)-5,10-methenyltetrahydrofolate + H2O = (6R)-10-formyltetrahydrofolate + H(+). It participates in one-carbon metabolism; tetrahydrofolate interconversion. Catalyzes the oxidation of 5,10-methylenetetrahydrofolate to 5,10-methenyltetrahydrofolate and then the hydrolysis of 5,10-methenyltetrahydrofolate to 10-formyltetrahydrofolate. The chain is Bifunctional protein FolD from Psychrobacter sp. (strain PRwf-1).